A 568-amino-acid chain; its full sequence is DNA ligase 2 (568 aa).

Glu254 provides a ligand contact to ATP. Lys256 serves as the catalytic N6-AMP-lysine intermediate. Residues Arg261, Arg276, Glu306, Phe346, Arg425, and Lys431 each coordinate ATP.

The protein belongs to the ATP-dependent DNA ligase family. It depends on Mg(2+) as a cofactor.

The catalysed reaction is ATP + (deoxyribonucleotide)n-3'-hydroxyl + 5'-phospho-(deoxyribonucleotide)m = (deoxyribonucleotide)n+m + AMP + diphosphate.. Its function is as follows. DNA ligase that seals nicks in double-stranded DNA during DNA replication, DNA recombination and DNA repair. The sequence is that of DNA ligase 2 from Methanosarcina mazei (strain ATCC BAA-159 / DSM 3647 / Goe1 / Go1 / JCM 11833 / OCM 88) (Methanosarcina frisia).